Consider the following 246-residue polypeptide: C-X-C motif chemokine 16 (246 aa).

The first 26 residues, Met1–Gly26, serve as a signal peptide directing secretion. Residues Asn27–Trp201 are Extracellular-facing. Intrachain disulfides connect Cys35/Cys65 and Cys37/Cys79. Disordered regions lie at residues Gly104–Leu150 and Pro175–Thr198. Residues Pro128–Pro146 show a composition bias toward polar residues. Residues Pro175–Gln189 are compositionally biased toward basic and acidic residues. The chain crosses the membrane as a helical span at residues Val202–Leu222. Residues Cys223–Pro246 lie on the Cytoplasmic side of the membrane.

Belongs to the intercrine alpha (chemokine CxC) family. Glycosylated. As to expression, widely expressed. Not detected in purified B- and T-cells.

It localises to the membrane. Its function is as follows. Induces a strong chemotactic response. Induces calcium mobilization. Binds to CXCR6/Bonzo. Also acts as a scavenger receptor on macrophages, which specifically binds to OxLDL (oxidized low density lipoprotein), suggesting that it may be involved in pathophysiology such as atherogenesis. The polypeptide is C-X-C motif chemokine 16 (Cxcl16) (Mus musculus (Mouse)).